Reading from the N-terminus, the 556-residue chain is Arginine--tRNA ligase 1 (556 aa).

Residues 132-142 (ANPTGNLHLGH) carry the 'HIGH' region motif.

It belongs to the class-I aminoacyl-tRNA synthetase family. Monomer.

Its subcellular location is the cytoplasm. It catalyses the reaction tRNA(Arg) + L-arginine + ATP = L-arginyl-tRNA(Arg) + AMP + diphosphate. The sequence is that of Arginine--tRNA ligase 1 (argS1) from Halalkalibacterium halodurans (strain ATCC BAA-125 / DSM 18197 / FERM 7344 / JCM 9153 / C-125) (Bacillus halodurans).